Consider the following 1043-residue polypeptide: Phosphatidylinositol 4,5-bisphosphate 3-kinase catalytic subunit delta isoform (1043 aa).

The PI3K-ABD domain occupies 16–105; the sequence is ESQSVVVDFL…LPVLRLVARE (90 aa). A PI3K-RBD domain is found at 187–278; that stretch reads NRALLVNVKF…GLTPHLTMVH (92 aa). The interval 287 to 312 is disordered; that stretch reads DEQSNPAPQVQKPRAKPPPIPAKKPS. One can recognise a C2 PI3K-type domain in the interval 319–476; that stretch reads LEQPFSIELI…SAAALVIYLP (158 aa). A PIK helical domain is found at 496-673; it reads RHGERGRITE…GLIMEAYCRG (178 aa). Tyrosine 523 is modified (phosphotyrosine). The PI3K/PI4K catalytic domain maps to 744–1026; it reads CVEQCTFMDS…KFNEALRESW (283 aa). A G-loop region spans residues 750-756; sequence FMDSKMK. Residues 889–897 form a catalytic loop region; that stretch reads GIGDRHSDN. Positions 908–934 are activation loop; it reads HIDFGHFLGNFKTKFGINRERVPFILT. Residue serine 1038 is modified to Phosphoserine; by autocatalysis.

It belongs to the PI3/PI4-kinase family. Heterodimer of a catalytic subunit PIK3CD and a p85 regulatory subunit (PIK3R1, PIK3R2 or PIK3R3). Interacts with ERAS and HRAS. In terms of processing, autophosphorylation on Ser-1038 results in the almost complete inactivation of the lipid kinase activity. Abundantly expressed in adult mouse spleen as well as in testis. Isoform 1 is expressed in spleen and lung (at protein level). Isoform 1 is expressed predominantly in leukocytes.

It localises to the cytoplasm. It carries out the reaction a 1,2-diacyl-sn-glycero-3-phospho-(1D-myo-inositol-4,5-bisphosphate) + ATP = a 1,2-diacyl-sn-glycero-3-phospho-(1D-myo-inositol-3,4,5-trisphosphate) + ADP + H(+). It catalyses the reaction a 1,2-diacyl-sn-glycero-3-phospho-(1D-myo-inositol) + ATP = a 1,2-diacyl-sn-glycero-3-phospho-(1D-myo-inositol-3-phosphate) + ADP + H(+). The catalysed reaction is 1-octadecanoyl-2-(5Z,8Z,11Z,14Z)-eicosatetraenoyl-sn-glycero-3-phospho-1D-myo-inositol 4,5-bisphosphate + ATP = 1-octadecanoyl-2-(5Z,8Z,11Z,14Z-eicosatetraenoyl)-sn-glycero-3-phospho-(1D-myo-inositol 3,4,5-triphosphate) + ADP + H(+). It functions in the pathway phospholipid metabolism; phosphatidylinositol phosphate biosynthesis. Activated by growth factors and cytokine receptors through a tyrosine-kinase-dependent mechanism. Activated by RAS. IC87114 inhibits lipid kinase activity and is selective in cells at doses up to 5-10 uM. Among other effects, IC87114 reduces allergic responses, prevents the recruitment of antigen-specific T cells into target tissue, and affects natural killer cell chemotaxis. Phosphoinositide-3-kinase (PI3K) phosphorylates phosphatidylinositol (PI) and its phosphorylated derivatives at position 3 of the inositol ring to produce 3-phosphoinositides. Uses ATP and PtdIns(4,5)P2 (phosphatidylinositol 4,5-bisphosphate) to generate phosphatidylinositol 3,4,5-trisphosphate (PIP3). PIP3 plays a key role by recruiting PH domain-containing proteins to the membrane, including AKT1 and PDPK1, activating signaling cascades involved in cell growth, survival, proliferation, motility and morphology. Mediates immune responses. Plays a role in B-cell development, proliferation, migration, and function. Required for B-cell receptor (BCR) signaling. Mediates B-cell proliferation response to anti-IgM, anti-CD40 and IL4 stimulation. Promotes cytokine production in response to TLR4 and TLR9. Required for antibody class switch mediated by TLR9. Involved in the antigen presentation function of B-cells. Involved in B-cell chemotaxis in response to CXCL13 and sphingosine 1-phosphate (S1P). Required for proliferation, signaling and cytokine production of naive, effector and memory T-cells. Required for T-cell receptor (TCR) signaling. Mediates TCR signaling events at the immune synapse. Activation by TCR leads to antigen-dependent memory T-cell migration and retention to antigenic tissues. Together with PIK3CG participates in T-cell development. Contributes to T-helper cell expansion and differentiation. Required for T-cell migration mediated by homing receptors SELL/CD62L, CCR7 and S1PR1 and antigen dependent recruitment of T-cells. Together with PIK3CG is involved in natural killer (NK) cell development and migration towards the sites of inflammation. Participates in NK cell receptor activation. Plays a role in NK cell maturation and cytokine production. Together with PIK3CG is involved in neutrophil chemotaxis and extravasation. Together with PIK3CG participates in neutrophil respiratory burst. Plays important roles in mast-cell development and mast cell mediated allergic response. Involved in stem cell factor (SCF)-mediated proliferation, adhesion and migration. Required for allergen-IgE-induced degranulation and cytokine release. The lipid kinase activity is required for its biological function. This Mus musculus (Mouse) protein is Phosphatidylinositol 4,5-bisphosphate 3-kinase catalytic subunit delta isoform (Pik3cd).